Reading from the N-terminus, the 340-residue chain is Probable dual-specificity RNA methyltransferase RlmN (340 aa).

Glu-90 (proton acceptor) is an active-site residue. The Radical SAM core domain occupies 97–325 (QVSRKTACLS…PVTRRYQRGN (229 aa)). Cys-104 and Cys-331 are oxidised to a cystine. [4Fe-4S] cluster-binding residues include Cys-111, Cys-115, and Cys-118. Residues 157–158 (GE), Ser-189, 212–214 (SLT), and Asn-288 contribute to the S-adenosyl-L-methionine site. The S-methylcysteine intermediate role is filled by Cys-331.

The protein belongs to the radical SAM superfamily. RlmN family. Requires [4Fe-4S] cluster as cofactor.

The protein localises to the cytoplasm. The catalysed reaction is adenosine(2503) in 23S rRNA + 2 reduced [2Fe-2S]-[ferredoxin] + 2 S-adenosyl-L-methionine = 2-methyladenosine(2503) in 23S rRNA + 5'-deoxyadenosine + L-methionine + 2 oxidized [2Fe-2S]-[ferredoxin] + S-adenosyl-L-homocysteine. It catalyses the reaction adenosine(37) in tRNA + 2 reduced [2Fe-2S]-[ferredoxin] + 2 S-adenosyl-L-methionine = 2-methyladenosine(37) in tRNA + 5'-deoxyadenosine + L-methionine + 2 oxidized [2Fe-2S]-[ferredoxin] + S-adenosyl-L-homocysteine. Its function is as follows. Specifically methylates position 2 of adenine 2503 in 23S rRNA and position 2 of adenine 37 in tRNAs. The protein is Probable dual-specificity RNA methyltransferase RlmN of Treponema pallidum (strain Nichols).